The chain runs to 308 residues: Ribosomal RNA small subunit methyltransferase H (308 aa).

Residues 32–34 (AGH), Asp51, Phe78, Asp99, and Gln106 contribute to the S-adenosyl-L-methionine site.

Belongs to the methyltransferase superfamily. RsmH family.

The protein localises to the cytoplasm. It carries out the reaction cytidine(1402) in 16S rRNA + S-adenosyl-L-methionine = N(4)-methylcytidine(1402) in 16S rRNA + S-adenosyl-L-homocysteine + H(+). Functionally, specifically methylates the N4 position of cytidine in position 1402 (C1402) of 16S rRNA. The sequence is that of Ribosomal RNA small subunit methyltransferase H from Mesoplasma florum (strain ATCC 33453 / NBRC 100688 / NCTC 11704 / L1) (Acholeplasma florum).